We begin with the raw amino-acid sequence, 244 residues long: Phosphoadenosine 5'-phosphosulfate reductase (244 aa).

The active-site Nucleophile; cysteine thiosulfonate intermediate is C239.

This sequence belongs to the PAPS reductase family. CysH subfamily.

It localises to the cytoplasm. It carries out the reaction [thioredoxin]-disulfide + sulfite + adenosine 3',5'-bisphosphate + 2 H(+) = [thioredoxin]-dithiol + 3'-phosphoadenylyl sulfate. It functions in the pathway sulfur metabolism; hydrogen sulfide biosynthesis; sulfite from sulfate: step 3/3. Catalyzes the formation of sulfite from phosphoadenosine 5'-phosphosulfate (PAPS) using thioredoxin as an electron donor. The chain is Phosphoadenosine 5'-phosphosulfate reductase from Cronobacter sakazakii (strain ATCC BAA-894) (Enterobacter sakazakii).